The following is a 264-amino-acid chain: 3-methyl-2-oxobutanoate hydroxymethyltransferase (264 aa).

Mg(2+)-binding residues include aspartate 45 and aspartate 84. 3-methyl-2-oxobutanoate-binding positions include 45–46, aspartate 84, and lysine 112; that span reads DS. Position 114 (glutamate 114) interacts with Mg(2+). Glutamate 181 acts as the Proton acceptor in catalysis.

This sequence belongs to the PanB family. Homodecamer; pentamer of dimers. The cofactor is Mg(2+).

Its subcellular location is the cytoplasm. The catalysed reaction is 3-methyl-2-oxobutanoate + (6R)-5,10-methylene-5,6,7,8-tetrahydrofolate + H2O = 2-dehydropantoate + (6S)-5,6,7,8-tetrahydrofolate. The protein operates within cofactor biosynthesis; (R)-pantothenate biosynthesis; (R)-pantoate from 3-methyl-2-oxobutanoate: step 1/2. In terms of biological role, catalyzes the reversible reaction in which hydroxymethyl group from 5,10-methylenetetrahydrofolate is transferred onto alpha-ketoisovalerate to form ketopantoate. In Vibrio parahaemolyticus serotype O3:K6 (strain RIMD 2210633), this protein is 3-methyl-2-oxobutanoate hydroxymethyltransferase.